The chain runs to 309 residues: Methionyl-tRNA formyltransferase (309 aa).

A (6S)-5,6,7,8-tetrahydrofolate-binding site is contributed by 107–110; that stretch reads SLLP.

It belongs to the Fmt family.

It catalyses the reaction L-methionyl-tRNA(fMet) + (6R)-10-formyltetrahydrofolate = N-formyl-L-methionyl-tRNA(fMet) + (6S)-5,6,7,8-tetrahydrofolate + H(+). In terms of biological role, attaches a formyl group to the free amino group of methionyl-tRNA(fMet). The formyl group appears to play a dual role in the initiator identity of N-formylmethionyl-tRNA by promoting its recognition by IF2 and preventing the misappropriation of this tRNA by the elongation apparatus. The protein is Methionyl-tRNA formyltransferase of Borrelia turicatae (strain 91E135).